Here is a 444-residue protein sequence, read N- to C-terminus: IMP-specific 5'-nucleotidase 1 (444 aa).

Residues K132 and H150 each coordinate ATP. The active-site Nucleophile is D170. Residues D170, D172, D178, T204, S207, S308, D363, and K371 each contribute to the IMP site. Mg(2+) contacts are provided by D170 and D172. D172 (proton donor) is an active-site residue. D394 lines the Mg(2+) pocket.

It belongs to the ISN1 family. As to quaternary structure, homotetramer. Mg(2+) serves as cofactor.

Its subcellular location is the cytoplasm. The catalysed reaction is IMP + H2O = inosine + phosphate. Its activity is regulated as follows. At physiological pH, allosterically activated by ATP. ATP binding is a prerequisite to magnesium and substrate binding. ATP binds to 2 of the subunits in the homotetramer inducing a closure of these 2 subunits and the release of the C-terminal loop, thereby activating the enzyme. In this conformation, the enzyme can bind IMP and magnesium which ultimately leads to the release of ATP. At pH 5, ATP does not have an allosteric role and is dispensable for magnesium and substrate binding. Inhibited by phosphocholine and D-myo-inositol-4-phosphate. In terms of biological role, specifically, catalyzes the dephosphorylation of inosine monophosphate (IMP) into inosine. By dephosphorylating IMP, plays a role in the purine salvage pathway. Does not have phosphotransferase activity with IMP as phosphate donor and adenosine as phosphate acceptor. This Plasmodium falciparum (isolate 3D7) protein is IMP-specific 5'-nucleotidase 1.